Here is a 266-residue protein sequence, read N- to C-terminus: N-acetylneuraminate lyase B (266 aa).

Aceneuramate is bound by residues Thr-51 and Thr-52. The Proton donor role is filled by Tyr-143. The active-site Schiff-base intermediate with substrate is the Lys-173. Residues Ser-175, Gly-197, Asp-199, Glu-200, and Ser-216 each contribute to the aceneuramate site.

The protein belongs to the DapA family. NanA subfamily. Homotetramer.

It is found in the cytoplasm. The catalysed reaction is aceneuramate = aldehydo-N-acetyl-D-mannosamine + pyruvate. It participates in amino-sugar metabolism; N-acetylneuraminate degradation. Catalyzes the cleavage of N-acetylneuraminic acid (sialic acid) to form pyruvate and N-acetylmannosamine via a Schiff base intermediate. It prevents sialic acids from being recycled and returning to the cell surface. Involved in the N-glycolylneuraminic acid (Neu5Gc) degradation pathway. The protein is N-acetylneuraminate lyase B (npl-b) of Xenopus laevis (African clawed frog).